Reading from the N-terminus, the 177-residue chain is Large ribosomal subunit protein uL6 (177 aa).

Belongs to the universal ribosomal protein uL6 family. As to quaternary structure, part of the 50S ribosomal subunit.

In terms of biological role, this protein binds to the 23S rRNA, and is important in its secondary structure. It is located near the subunit interface in the base of the L7/L12 stalk, and near the tRNA binding site of the peptidyltransferase center. The protein is Large ribosomal subunit protein uL6 of Methylibium petroleiphilum (strain ATCC BAA-1232 / LMG 22953 / PM1).